The following is a 1089-amino-acid chain: Ankyrin repeat and IBR domain-containing protein 1 (1089 aa).

Gly-2 is lipidated: N-myristoyl glycine. ANK repeat units lie at residues 45 to 74 (QHNT…NPNK) and 144 to 173 (KKNT…DLFA). The disordered stretch occupies residues 281 to 321 (CQRSGVQMPTPPPSGYNAWDTLPSPRTPRTTRSSVTSPDEI). Residues 303-318 (PSPRTPRTTRSSVTSP) show a composition bias toward low complexity. The TRIAD supradomain stretch occupies residues 329–569 (DTSLCDICMC…GGYYRCTRYE (241 aa)). 14 residues coordinate Zn(2+): Cys-333, Cys-336, Cys-351, His-353, Cys-356, Cys-359, Cys-378, Cys-383, Cys-465, Cys-468, His-473, Cys-478, Cys-519, and Cys-522. The RING-type 1 zinc-finger motif lies at 333-383 (CDICMCSISVFEDPVDMPCGHDFCRGCWESFLNLKIQEGEAHNIFCPAYDC). The IBR-type zinc finger occupies 401–478 (DKRYLQFDIK…LGEAHEPCDC (78 aa)). Residues 519–548 (CANCKSPIQKNEGCNHMQCAKCKYDFCWIC) form an RING-type 2; atypical zinc finger. The active site involves Cys-532. Zn(2+) is bound by residues Cys-537, Cys-540, Cys-545, Cys-548, His-555, and Cys-565. Residues 575-640 (EEQSKEMTVE…RALKETEGGC (66 aa)) adopt a coiled-coil conformation. Phosphoserine is present on Ser-737. The disordered stretch occupies residues 776–821 (RRGDVHSLLSNPPDPDEPSESTLDIPEGGSSSRRPGTSVVSSASMS). The UIM domain maps to 851 to 870 (EDDPNILLAIQLSLQESGLA). 2 positions are modified to phosphoserine: Ser-884 and Ser-911. Disordered stretches follow at residues 889–912 (GTSL…ALSS), 927–964 (AEND…QDPN), and 1026–1089 (DASV…VHLV). Polar residues-rich tracts occupy residues 931-941 (PFSTDTLSSHP) and 1070-1082 (DVSS…SSDW).

This sequence belongs to the RBR family.

It carries out the reaction [E2 ubiquitin-conjugating enzyme]-S-ubiquitinyl-L-cysteine + [acceptor protein]-L-lysine = [E2 ubiquitin-conjugating enzyme]-L-cysteine + [acceptor protein]-N(6)-ubiquitinyl-L-lysine.. Might act as an E3 ubiquitin-protein ligase, or as part of E3 complex, which accepts ubiquitin from specific E2 ubiquitin-conjugating enzymes and then transfers it to substrates. This chain is Ankyrin repeat and IBR domain-containing protein 1 (ANKIB1), found in Homo sapiens (Human).